The following is a 345-amino-acid chain: Aspartate-semialdehyde dehydrogenase (345 aa).

NADP(+) contacts are provided by residues 11 to 14 and 39 to 40; these read TGQV and RS. Position 99 (Arg-99) interacts with phosphate. The active-site Acyl-thioester intermediate is Cys-130. Gln-157 lines the substrate pocket. 160–161 contacts NADP(+); that stretch reads SG. A phosphate-binding site is contributed by Lys-227. Arg-249 contacts substrate. His-256 (proton acceptor) is an active-site residue. Asn-325 contributes to the NADP(+) binding site.

The protein belongs to the aspartate-semialdehyde dehydrogenase family. In terms of assembly, homodimer.

The catalysed reaction is L-aspartate 4-semialdehyde + phosphate + NADP(+) = 4-phospho-L-aspartate + NADPH + H(+). Its pathway is amino-acid biosynthesis; L-lysine biosynthesis via DAP pathway; (S)-tetrahydrodipicolinate from L-aspartate: step 2/4. The protein operates within amino-acid biosynthesis; L-methionine biosynthesis via de novo pathway; L-homoserine from L-aspartate: step 2/3. It functions in the pathway amino-acid biosynthesis; L-threonine biosynthesis; L-threonine from L-aspartate: step 2/5. In terms of biological role, catalyzes the NADPH-dependent formation of L-aspartate-semialdehyde (L-ASA) by the reductive dephosphorylation of L-aspartyl-4-phosphate. The sequence is that of Aspartate-semialdehyde dehydrogenase from Mycobacterium bovis (strain ATCC BAA-935 / AF2122/97).